The primary structure comprises 146 residues: Snaclec echicetin subunit beta (146 aa).

Positions 1–23 (MGRFISVSFGLLVLLLSLSGTGA) are cleaved as a signal peptide. Intrachain disulfides connect cysteine 25/cysteine 36, cysteine 53/cysteine 142, and cysteine 119/cysteine 134. The C-type lectin domain occupies 32 to 143 (YEGYCYKVFK…CTWTFSFVCK (112 aa)).

This sequence belongs to the snaclec family. In terms of assembly, heterodimer of subunits alpha and beta; disulfide-linked. As to expression, expressed by the venom gland.

Its subcellular location is the secreted. Functionally, binding of echicetin to glycoprotein Ibalpha (GP1BA) receptor on platelets alone results in inhibition of platelet aggregation, while binding to both GPIba receptor and IgMk promotes platelet aggregation and signal transduction. The polypeptide is Snaclec echicetin subunit beta (Echis carinatus (Saw-scaled viper)).